The primary structure comprises 89 residues: Large ribosomal subunit protein bL27 (89 aa).

The disordered stretch occupies residues 1–22 (MAHKKAGGSSRNGRDSESKRLG).

This sequence belongs to the bacterial ribosomal protein bL27 family.

The sequence is that of Large ribosomal subunit protein bL27 from Bartonella henselae (strain ATCC 49882 / DSM 28221 / CCUG 30454 / Houston 1) (Rochalimaea henselae).